A 377-amino-acid polypeptide reads, in one-letter code: N-acetyldiaminopimelate deacetylase (377 aa).

Aspartate 70 is an active-site residue. Residue glutamate 129 is the Proton acceptor of the active site.

It belongs to the peptidase M20A family. N-acetyldiaminopimelate deacetylase subfamily.

It carries out the reaction N-acetyl-(2S,6S)-2,6-diaminopimelate + H2O = (2S,6S)-2,6-diaminopimelate + acetate. It participates in amino-acid biosynthesis; L-lysine biosynthesis via DAP pathway; LL-2,6-diaminopimelate from (S)-tetrahydrodipicolinate (acetylase route): step 3/3. Functionally, catalyzes the conversion of N-acetyl-diaminopimelate to diaminopimelate and acetate. This is N-acetyldiaminopimelate deacetylase from Geobacillus thermodenitrificans (strain NG80-2).